The chain runs to 185 residues: Large ribosomal subunit protein uL5m (185 aa).

It belongs to the universal ribosomal protein uL5 family. In terms of assembly, component of the mitochondrial ribosome large subunit.

The protein localises to the mitochondrion. This Arabidopsis thaliana (Mouse-ear cress) protein is Large ribosomal subunit protein uL5m (RPL5).